Reading from the N-terminus, the 302-residue chain is 3-methyl-2-oxobutanoate hydroxymethyltransferase 1 (302 aa).

2 residues coordinate Mg(2+): Asp-75 and Asp-118. 3-methyl-2-oxobutanoate-binding positions include 75–76 (DS), Asp-118, and Lys-147. Glu-149 contacts Mg(2+). Glu-217 (proton acceptor) is an active-site residue.

This sequence belongs to the PanB family. Homodecamer; pentamer of dimers. Requires Mg(2+) as cofactor.

It is found in the cytoplasm. It catalyses the reaction 3-methyl-2-oxobutanoate + (6R)-5,10-methylene-5,6,7,8-tetrahydrofolate + H2O = 2-dehydropantoate + (6S)-5,6,7,8-tetrahydrofolate. It participates in cofactor biosynthesis; (R)-pantothenate biosynthesis; (R)-pantoate from 3-methyl-2-oxobutanoate: step 1/2. In terms of biological role, catalyzes the reversible reaction in which hydroxymethyl group from 5,10-methylenetetrahydrofolate is transferred onto alpha-ketoisovalerate to form ketopantoate. This Zymomonas mobilis subsp. mobilis (strain ATCC 31821 / ZM4 / CP4) protein is 3-methyl-2-oxobutanoate hydroxymethyltransferase 1.